Here is a 70-residue protein sequence, read N- to C-terminus: Small, acid-soluble spore protein 1 (70 aa).

It belongs to the alpha/beta-type SASP family.

Functionally, SASP are bound to spore DNA. They are double-stranded DNA-binding proteins that cause DNA to change to an a-like conformation. They protect the DNA backbone from chemical and enzymatic cleavage and are thus involved in dormant spore's high resistance to UV light. This is Small, acid-soluble spore protein 1 from Bacillus subtilis.